We begin with the raw amino-acid sequence, 946 residues long: Bifunctional glutamine synthetase adenylyltransferase/adenylyl-removing enzyme (946 aa).

The interval 1–440 (MKPLSSPLQQ…VFNELIGDDE (440 aa)) is adenylyl removase. An adenylyl transferase region spans residues 449–946 (SEQWRELWQD…ASWQKWLVEE (498 aa)).

It belongs to the GlnE family. Mg(2+) serves as cofactor.

It catalyses the reaction [glutamine synthetase]-O(4)-(5'-adenylyl)-L-tyrosine + phosphate = [glutamine synthetase]-L-tyrosine + ADP. It carries out the reaction [glutamine synthetase]-L-tyrosine + ATP = [glutamine synthetase]-O(4)-(5'-adenylyl)-L-tyrosine + diphosphate. In terms of biological role, involved in the regulation of glutamine synthetase GlnA, a key enzyme in the process to assimilate ammonia. When cellular nitrogen levels are high, the C-terminal adenylyl transferase (AT) inactivates GlnA by covalent transfer of an adenylyl group from ATP to specific tyrosine residue of GlnA, thus reducing its activity. Conversely, when nitrogen levels are low, the N-terminal adenylyl removase (AR) activates GlnA by removing the adenylyl group by phosphorolysis, increasing its activity. The regulatory region of GlnE binds the signal transduction protein PII (GlnB) which indicates the nitrogen status of the cell. In Escherichia coli O9:H4 (strain HS), this protein is Bifunctional glutamine synthetase adenylyltransferase/adenylyl-removing enzyme.